Reading from the N-terminus, the 314-residue chain is Mycothiol acetyltransferase (314 aa).

N-acetyltransferase domains lie at 18 to 156 (ATIR…RPLA) and 168 to 314 (IRIA…MYQL). Residue Glu38 coordinates 1D-myo-inositol 2-(L-cysteinylamino)-2-deoxy-alpha-D-glucopyranoside. 92–94 (VVV) contributes to the acetyl-CoA binding site. Glu195, Lys234, and Glu248 together coordinate 1D-myo-inositol 2-(L-cysteinylamino)-2-deoxy-alpha-D-glucopyranoside. Acetyl-CoA-binding positions include 252-254 (VGL) and 259-265 (QGHGLGR). A 1D-myo-inositol 2-(L-cysteinylamino)-2-deoxy-alpha-D-glucopyranoside-binding site is contributed by Tyr286.

It belongs to the acetyltransferase family. MshD subfamily. As to quaternary structure, monomer.

The enzyme catalyses 1D-myo-inositol 2-(L-cysteinylamino)-2-deoxy-alpha-D-glucopyranoside + acetyl-CoA = mycothiol + CoA + H(+). Its function is as follows. Catalyzes the transfer of acetyl from acetyl-CoA to desacetylmycothiol (Cys-GlcN-Ins) to form mycothiol. In Catenulispora acidiphila (strain DSM 44928 / JCM 14897 / NBRC 102108 / NRRL B-24433 / ID139908), this protein is Mycothiol acetyltransferase.